Consider the following 922-residue polypeptide: Lacticin 481/lactococcin biosynthesis protein LcnDR2 (922 aa).

Functionally, could be implicated in the processing or the export process of the lantibiotic lacticin 481/lactococcin DR. In Lactococcus lactis subsp. lactis (Streptococcus lactis), this protein is Lacticin 481/lactococcin biosynthesis protein LcnDR2 (lcnDR2).